The following is a 63-amino-acid chain: Large ribosomal subunit protein bL28 (63 aa).

Belongs to the bacterial ribosomal protein bL28 family.

The chain is Large ribosomal subunit protein bL28 (rpmB) from Selenomonas ruminantium.